A 494-amino-acid polypeptide reads, in one-letter code: Guanosine-5'-triphosphate,3'-diphosphate pyrophosphatase (494 aa).

Belongs to the GppA/Ppx family. GppA subfamily.

It carries out the reaction guanosine 3'-diphosphate 5'-triphosphate + H2O = guanosine 3',5'-bis(diphosphate) + phosphate + H(+). It functions in the pathway purine metabolism; ppGpp biosynthesis; ppGpp from GTP: step 2/2. Its function is as follows. Catalyzes the conversion of pppGpp to ppGpp. Guanosine pentaphosphate (pppGpp) is a cytoplasmic signaling molecule which together with ppGpp controls the 'stringent response', an adaptive process that allows bacteria to respond to amino acid starvation, resulting in the coordinated regulation of numerous cellular activities. The sequence is that of Guanosine-5'-triphosphate,3'-diphosphate pyrophosphatase from Cronobacter sakazakii (strain ATCC BAA-894) (Enterobacter sakazakii).